Here is a 365-residue protein sequence, read N- to C-terminus: tRNA/tmRNA (uracil-C(5))-methyltransferase (365 aa).

The S-adenosyl-L-methionine site is built by Gln-189, Tyr-217, Asn-222, Glu-238, and Asp-298. Cys-323 functions as the Nucleophile in the catalytic mechanism. Glu-357 serves as the catalytic Proton acceptor.

This sequence belongs to the class I-like SAM-binding methyltransferase superfamily. RNA M5U methyltransferase family. TrmA subfamily.

The enzyme catalyses uridine(54) in tRNA + S-adenosyl-L-methionine = 5-methyluridine(54) in tRNA + S-adenosyl-L-homocysteine + H(+). It catalyses the reaction uridine(341) in tmRNA + S-adenosyl-L-methionine = 5-methyluridine(341) in tmRNA + S-adenosyl-L-homocysteine + H(+). Dual-specificity methyltransferase that catalyzes the formation of 5-methyluridine at position 54 (m5U54) in all tRNAs, and that of position 341 (m5U341) in tmRNA (transfer-mRNA). The protein is tRNA/tmRNA (uracil-C(5))-methyltransferase of Psychromonas ingrahamii (strain DSM 17664 / CCUG 51855 / 37).